A 263-amino-acid chain; its full sequence is Shikimate dehydrogenase (NADP(+)) (263 aa).

Shikimate contacts are provided by residues Ser-16–Ser-18 and Thr-65. Lys-69 acts as the Proton acceptor in catalysis. Residues Asn-90 and Asp-105 each coordinate shikimate. Residues Gly-125 to Ser-129 and Leu-208 contribute to the NADP(+) site. Tyr-210 serves as a coordination point for shikimate. Position 230 (Gly-230) interacts with NADP(+).

This sequence belongs to the shikimate dehydrogenase family. As to quaternary structure, homodimer.

It carries out the reaction shikimate + NADP(+) = 3-dehydroshikimate + NADPH + H(+). Its pathway is metabolic intermediate biosynthesis; chorismate biosynthesis; chorismate from D-erythrose 4-phosphate and phosphoenolpyruvate: step 4/7. Involved in the biosynthesis of the chorismate, which leads to the biosynthesis of aromatic amino acids. Catalyzes the reversible NADPH linked reduction of 3-dehydroshikimate (DHSA) to yield shikimate (SA). The chain is Shikimate dehydrogenase (NADP(+)) from Helicobacter pylori (strain P12).